We begin with the raw amino-acid sequence, 126 residues long: Nascent polypeptide-associated complex protein (126 aa).

The 68-residue stretch at 10–77 (PRMMKQMQKM…AKKVAKEEEK (68 aa)) folds into the NAC-A/B domain.

The protein belongs to the NAC-alpha family. Homodimer. Interacts with the ribosome. Binds ribosomal RNA.

In terms of biological role, contacts the emerging nascent chain on the ribosome. The protein is Nascent polypeptide-associated complex protein of Methanococcus maripaludis (strain DSM 14266 / JCM 13030 / NBRC 101832 / S2 / LL).